A 55-amino-acid polypeptide reads, in one-letter code: Large ribosomal subunit protein bL33 (55 aa).

The protein is methylated on either Ala-2 or Lys-3.

This is Large ribosomal subunit protein bL33 from Rhodopseudomonas palustris (strain ATCC BAA-98 / CGA009).